Here is a 673-residue protein sequence, read N- to C-terminus: Synaptotagmin-like protein 4 (673 aa).

Positions 4 to 122 constitute a RabBD domain; the sequence is ILDLSFLSEM…KATGDWFYDQ (119 aa). The FYVE-type zinc finger occupies 63-105; it reads CARCQEGLGRLIPKSSTCVGCNHLVCRECRVLESNGSWRCKVC. The disordered stretch occupies residues 184–253; it reads FEVPKTRSGK…PGNQNAVCGD (70 aa). Residues Ser-202, Ser-205, Ser-218, Ser-222, and Ser-275 each carry the phosphoserine modification. In terms of domain architecture, C2 1 spans 358–480; it reads VTGKIAFSLK…KLDKKLDHCL (123 aa). Ser-490 carries the phosphoserine modification. The C2 2 domain occupies 509–635; the sequence is PASKLPVGGD…ISNGEVVDWM (127 aa).

As to quaternary structure, part of a ternary complex containing STX1A and RAB27A. Can bind both dominant negative and dominant active mutants of RAB27A. Binds STXBP1, RAB3A, RAB8A and RAB27B. Interacts with MYO5A. As to expression, detected in the pancreatic islet, in particular in insulin-positive beta cells, and in pituitary.

Its subcellular location is the membrane. It is found in the cytoplasmic vesicle. The protein resides in the secretory vesicle membrane. Modulates exocytosis of dense-core granules and secretion of hormones in the pancreas and the pituitary. Interacts with vesicles containing negatively charged phospholipids in a Ca(2+)-independent manner. The polypeptide is Synaptotagmin-like protein 4 (Sytl4) (Mus musculus (Mouse)).